A 372-amino-acid chain; its full sequence is Secreted beta-glucosidase SIM1 (372 aa).

A signal peptide spans 1 to 15; it reads MKYLTLLTVLSTALA. Positions 51 to 85 are disordered; sequence VTENASSGASSGETAETIQTRSSSDVSSSSDSNPV. Low complexity predominate over residues 52–85; the sequence is TENASSGASSGETAETIQTRSSSDVSSSSDSNPV. N-linked (GlcNAc...) asparagine glycosylation is found at N54 and N351.

It belongs to the SUN family.

It is found in the secreted. It localises to the cell wall. In terms of biological role, cell surface beta-glucosidase involved in cell wall maintenance and cytokinesis. Plays a role redundant to SUN41. This is Secreted beta-glucosidase SIM1 (SIM1) from Candida albicans (strain SC5314 / ATCC MYA-2876) (Yeast).